The sequence spans 385 residues: Interleukin-13 receptor subunit alpha-2 (385 aa).

Residues 1-23 form the signal peptide; sequence MALMAVNTRCLCLFLLCTITGHS. Residues 24 to 336 lie on the Extracellular side of the membrane; the sequence is LEIKVNPPQD…WEGYTGPDSK (313 aa). Fibronectin type-III domains are found at residues 30–130, 133–221, and 236–334; these read PPQD…ADEG, GTKI…PIRS, and PPEF…TGPD. The cysteines at positions 61 and 109 are disulfide-linked. Asn-111 carries N-linked (GlcNAc...) asparagine glycosylation. A disulfide bridge links Cys-141 with Cys-151. The N-linked (GlcNAc...) asparagine glycan is linked to Asn-164. Cysteines 180 and 193 form a disulfide. 2 N-linked (GlcNAc...) asparagine glycosylation sites follow: Asn-211 and Asn-295. A disulfide bond links Cys-265 and Cys-312. The WSXWS motif signature appears at 318–322; the sequence is WSEWS. A helical transmembrane segment spans residues 337–357; the sequence is IVFIVPVCLFFIFLLLLLCLI. The Cytoplasmic segment spans residues 358–385; it reads VEKEDPEPTLSLHVDLNKEMYAYEETLC.

It belongs to the type I cytokine receptor family. Type 5 subfamily. In terms of assembly, interacts with IL4RA. Interacts with high affinity to interleukin-13 (IL13), but not to interleukin-4 (IL4). Post-translationally, cleaved by MMP8 leading to a soluble form that is also able to interact with IL13.

It localises to the cell membrane. Cell surface receptor that plays a role in the regulation of IL-13-mediated responses. Functions as a decoy receptor that inhibits IL-13- and IL-4-mediated signal transduction via the JAK-STAT pathway and thereby modulates immune responses and inflammation. Serves as a functional signaling receptor for IL-13 in an alternative pathway involving AP-1 ultimately leading to the production of TGFB1. The polypeptide is Interleukin-13 receptor subunit alpha-2 (Il13ra2) (Rattus norvegicus (Rat)).